The chain runs to 1040 residues: Multidrug resistance protein MdtB (1040 aa).

The next 12 membrane-spanning stretches (helical) occupy residues 16 to 36, 347 to 367, 369 to 389, 396 to 416, 440 to 460, 472 to 492, 537 to 557, 863 to 883, 888 to 908, 911 to 931, 968 to 988, and 998 to 1018; these read FIMRPVATTLLMVAILLAGII, LMMAIALVVMIIYLFLRNIPA, IIPGVAVPLSLIGTFAVMVFL, LTLMALTIATGFVVDDAIVVI, IGFTIISLTFSLIAVLIPLLF, FAITLAVAILISAVVSLTLTP, WLTLSVALSTLLLSVLLWVFI, LGSTVWLIVAAVVAMYIVLGI, FIHPITILSTLPTAGVGALLA, IAGSELDVIAIIGIILLIGIV, ILMTTLAALLGALPLMLSTGV, and IGMVGGLVVSQVLTLFTTPVI.

Belongs to the resistance-nodulation-cell division (RND) (TC 2.A.6) family. MdtB subfamily. Part of a tripartite efflux system composed of MdtA, MdtB and MdtC. MdtB forms a heteromultimer with MdtC.

It localises to the cell inner membrane. The protein is Multidrug resistance protein MdtB of Shigella boydii serotype 18 (strain CDC 3083-94 / BS512).